A 508-amino-acid polypeptide reads, in one-letter code: MGLPWYRVHTVVLNDPGRLIAVHLMHTALVSGWAGSMALYELAVFDPSDPVLDPMWRQGMFVIPFMTRLGITKSWGGWSITGETVTNAGIWSYEGVAAVHIVLSGLLFLAAIWHWVYWDLELFRDERTGKPSLDLPKIFGIHLFLSGVLCFAFGAFHVTGLFGPGIWISDPYGLTGKVQPVAPAWGAEGFDPFVPGGIASHHIAAGILGILAGLFHLSVRPPQRLYKGLRMGNVETVLSSSIAAVFFAAFVVAGTMWYGSAATPIELFGPTRYQWDQGFFQQEIDRRIRSSKAENLSLSEAWSKIPEKLAFYDYIGNNPAKGGLFRAGAMDNGDGIAVGWLGHAVFKDKEGNELFVRRMPTFFETFPVVLVDEQGIVRADVPFRRAESKYSVEQVGVTVEFYGGELDGVSFSDPATVKKYARRAQLGEIFEFDRATLKSDGVFRSSPRGWFTFGHATFALLFFFGHIWHGARTLFRDVFAGIDPDLDAQVEFGAFQKLGDPTTKRQVI.

Helical transmembrane passes span 21–36 (AVHL…WAGS), 101–115 (IVLS…IWHW), 140–156 (GIHL…FGAF), 203–218 (IAAG…FHLS), 237–252 (VLSS…AFVV), and 457–472 (TFAL…HGAR).

It belongs to the PsbB/PsbC family. PsbB subfamily. In terms of assembly, PSII is composed of 1 copy each of membrane proteins PsbA, PsbB, PsbC, PsbD, PsbE, PsbF, PsbH, PsbI, PsbJ, PsbK, PsbL, PsbM, PsbT, PsbX, PsbY, PsbZ, Psb30/Ycf12, at least 3 peripheral proteins of the oxygen-evolving complex and a large number of cofactors. It forms dimeric complexes. Binds multiple chlorophylls. PSII binds additional chlorophylls, carotenoids and specific lipids. is required as a cofactor.

It is found in the plastid. The protein resides in the chloroplast thylakoid membrane. Functionally, one of the components of the core complex of photosystem II (PSII). It binds chlorophyll and helps catalyze the primary light-induced photochemical processes of PSII. PSII is a light-driven water:plastoquinone oxidoreductase, using light energy to abstract electrons from H(2)O, generating O(2) and a proton gradient subsequently used for ATP formation. This is Photosystem II CP47 reaction center protein from Marchantia polymorpha (Common liverwort).